The chain runs to 259 residues: Protein IQ-DOMAIN 10 (259 aa).

Residues 18–39 (KNKSNRGNVHSETSNRVKPVES) form a disordered region. Positions 50-77 (EVAVIRIQKAFRAFKARKRLCSLKSARR) constitute an IQ domain. Residues 61 to 71 (RAFKARKRLCS) form a calmodulin-binding region. The segment at 226–259 (KPSKKPEKSSPNNVITKTSAKPDEVGNSKKPGSG) is disordered.

This sequence belongs to the IQD family. As to quaternary structure, binds to multiple calmodulin (CaM) in the presence of Ca(2+) and CaM-like proteins.

It is found in the nucleus. The protein resides in the cytoplasm. The protein localises to the cytoskeleton. In terms of biological role, may be involved in cooperative interactions with calmodulins or calmodulin-like proteins. Recruits calmodulin proteins to microtubules, thus being a potential scaffold in cellular signaling and trafficking. May associate with nucleic acids and regulate gene expression at the transcriptional or post-transcriptional level. This is Protein IQ-DOMAIN 10 from Arabidopsis thaliana (Mouse-ear cress).